The primary structure comprises 436 residues: Phosphoribosylamine--glycine ligase (436 aa).

Residues 106-318 (RKLFEDYDIE…LADVCQAIVD (213 aa)) form the ATP-grasp domain. Residue 133–196 (LDDFDRDVVV…EERLIGEEFT (64 aa)) coordinates ATP. Residues Q276, E288, and N290 each coordinate Mg(2+). The Mn(2+) site is built by Q276, E288, and N290.

Belongs to the GARS family. Mg(2+) serves as cofactor. The cofactor is Mn(2+).

It catalyses the reaction 5-phospho-beta-D-ribosylamine + glycine + ATP = N(1)-(5-phospho-beta-D-ribosyl)glycinamide + ADP + phosphate + H(+). The protein operates within purine metabolism; IMP biosynthesis via de novo pathway; N(1)-(5-phospho-D-ribosyl)glycinamide from 5-phospho-alpha-D-ribose 1-diphosphate: step 2/2. This chain is Phosphoribosylamine--glycine ligase, found in Methanobrevibacter smithii (strain ATCC 35061 / DSM 861 / OCM 144 / PS).